Consider the following 266-residue polypeptide: Auxin-responsive protein IAA21 (266 aa).

Positions 24–28 (LRLGL) match the EAR-like (transcriptional repression) motif. Residues 27 to 50 (GLPGTAEEAESEGGGGGGTDAAPL) form a disordered region. In terms of domain architecture, PB1 spans 146-248 (CLYVKVSMDG…SCRRLRIMKG (103 aa)).

Belongs to the Aux/IAA family. In terms of assembly, homodimers and heterodimers. Highly expressed in flowers. Expressed in roots and seedlings.

The protein localises to the nucleus. In terms of biological role, aux/IAA proteins are short-lived transcriptional factors that function as repressors of early auxin response genes at low auxin concentrations. This is Auxin-responsive protein IAA21 (IAA21) from Oryza sativa subsp. japonica (Rice).